Reading from the N-terminus, the 205-residue chain is ATP-dependent Clp protease proteolytic subunit 2 (205 aa).

S100 acts as the Nucleophile in catalysis. H125 is an active-site residue.

It belongs to the peptidase S14 family. Fourteen ClpP subunits assemble into 2 heptameric rings which stack back to back to give a disk-like structure with a central cavity, resembling the structure of eukaryotic proteasomes.

Its subcellular location is the cytoplasm. The enzyme catalyses Hydrolysis of proteins to small peptides in the presence of ATP and magnesium. alpha-casein is the usual test substrate. In the absence of ATP, only oligopeptides shorter than five residues are hydrolyzed (such as succinyl-Leu-Tyr-|-NHMec, and Leu-Tyr-Leu-|-Tyr-Trp, in which cleavage of the -Tyr-|-Leu- and -Tyr-|-Trp bonds also occurs).. Cleaves peptides in various proteins in a process that requires ATP hydrolysis. Has a chymotrypsin-like activity. Plays a major role in the degradation of misfolded proteins. The sequence is that of ATP-dependent Clp protease proteolytic subunit 2 from Chlamydia abortus (strain DSM 27085 / S26/3) (Chlamydophila abortus).